Reading from the N-terminus, the 415-residue chain is Esterase FrsA (415 aa).

It belongs to the FrsA family.

It catalyses the reaction a carboxylic ester + H2O = an alcohol + a carboxylate + H(+). Functionally, catalyzes the hydrolysis of esters. In Serratia proteamaculans (strain 568), this protein is Esterase FrsA.